A 398-amino-acid polypeptide reads, in one-letter code: Candidapepsin-3 (398 aa).

The signal sequence occupies residues 1–18 (MFLKNIFIALAIALLADA). A propeptide spans 19-58 (TPTTSNNSPGFVALNFDVIKTHKNVTGPQGEINTNVNVKR) (activation peptide). Asn-42 carries an N-linked (GlcNAc...) asparagine glycan. One can recognise a Peptidase A1 domain in the interval 72–384 (YASDITVGSN…DLDDNEISLA (313 aa)). The active site involves Asp-90. 90-92 (DTG) contributes to the pepstatin A binding site. Polar residues predominate over residues 103–112 (VSCQAGQGQD). The disordered stretch occupies residues 103–139 (VSCQAGQGQDPNFCKNEGTYSPSSSSSSQNLNSPFSI). A disulfide bridge links Cys-105 with Cys-116. Residues 123–138 (SPSSSSSSQNLNSPFS) show a composition bias toward low complexity. Pepstatin A is bound by residues 140 to 143 (EYGD) and 274 to 278 (DSGTT). Asp-274 is an active-site residue. Cys-312 and Cys-350 are oxidised to a cystine. Asn-313 carries N-linked (GlcNAc...) asparagine glycosylation.

It belongs to the peptidase A1 family. O-glycosylated.

It localises to the secreted. The catalysed reaction is Preferential cleavage at the carboxyl of hydrophobic amino acids, but fails to cleave 15-Leu-|-Tyr-16, 16-Tyr-|-Leu-17 and 24-Phe-|-Phe-25 of insulin B chain. Activates trypsinogen, and degrades keratin.. This Candida albicans (strain WO-1) (Yeast) protein is Candidapepsin-3 (SAP3).